The chain runs to 101 residues: Small ribosomal subunit protein uS14 (101 aa).

This sequence belongs to the universal ribosomal protein uS14 family. In terms of assembly, part of the 30S ribosomal subunit. Contacts proteins S3 and S10.

In terms of biological role, binds 16S rRNA, required for the assembly of 30S particles and may also be responsible for determining the conformation of the 16S rRNA at the A site. This chain is Small ribosomal subunit protein uS14, found in Haemophilus influenzae (strain 86-028NP).